The sequence spans 242 residues: DNA repair protein RecO (242 aa).

The protein belongs to the RecO family.

Its function is as follows. Involved in DNA repair and RecF pathway recombination. The polypeptide is DNA repair protein RecO (Xanthobacter autotrophicus (strain ATCC BAA-1158 / Py2)).